The sequence spans 265 residues: 4-diphosphocytidyl-2-C-methyl-D-erythritol kinase (265 aa).

The active site involves K8. Residue 95 to 105 (PIGAGLGGGSS) coordinates ATP. The active site involves D135.

This sequence belongs to the GHMP kinase family. IspE subfamily.

The catalysed reaction is 4-CDP-2-C-methyl-D-erythritol + ATP = 4-CDP-2-C-methyl-D-erythritol 2-phosphate + ADP + H(+). The protein operates within isoprenoid biosynthesis; isopentenyl diphosphate biosynthesis via DXP pathway; isopentenyl diphosphate from 1-deoxy-D-xylulose 5-phosphate: step 3/6. Catalyzes the phosphorylation of the position 2 hydroxy group of 4-diphosphocytidyl-2C-methyl-D-erythritol. The polypeptide is 4-diphosphocytidyl-2-C-methyl-D-erythritol kinase (Ureaplasma urealyticum serovar 10 (strain ATCC 33699 / Western)).